Reading from the N-terminus, the 440-residue chain is Light-independent protochlorophyllide reductase subunit B (440 aa).

Aspartate 36 is a [4Fe-4S] cluster binding site. Substrate is bound at residue 427–428; that stretch reads KD.

The protein belongs to the ChlB/BchB/BchZ family. Protochlorophyllide reductase is composed of three subunits; ChlL, ChlN and ChlB. Forms a heterotetramer of two ChlB and two ChlN subunits. [4Fe-4S] cluster serves as cofactor.

It is found in the plastid. It localises to the cyanelle. It carries out the reaction chlorophyllide a + oxidized 2[4Fe-4S]-[ferredoxin] + 2 ADP + 2 phosphate = protochlorophyllide a + reduced 2[4Fe-4S]-[ferredoxin] + 2 ATP + 2 H2O. It participates in porphyrin-containing compound metabolism; chlorophyll biosynthesis (light-independent). Its function is as follows. Component of the dark-operative protochlorophyllide reductase (DPOR) that uses Mg-ATP and reduced ferredoxin to reduce ring D of protochlorophyllide (Pchlide) to form chlorophyllide a (Chlide). This reaction is light-independent. The NB-protein (ChlN-ChlB) is the catalytic component of the complex. In Cyanophora paradoxa, this protein is Light-independent protochlorophyllide reductase subunit B.